A 356-amino-acid chain; its full sequence is Arginine kinase (356 aa).

The 83-residue stretch at 9-91 (KLEAGFQKLQ…FDPIIEDYHI (83 aa)) folds into the Phosphagen kinase N-terminal domain. 64-68 (GVGIY) contributes to the L-arginine binding site. The region spanning 119–356 (FVISTRVRCG…AELIKLEQSA (238 aa)) is the Phosphagen kinase C-terminal domain. Residues 122–126 (STRVR) and histidine 185 contribute to the ATP site. Position 225 (glutamate 225) interacts with L-arginine. Position 229 (arginine 229) interacts with ATP. Cysteine 271 provides a ligand contact to L-arginine. ATP contacts are provided by residues 280–284 (RASVH) and 309–314 (RGTRGE). Glutamate 314 lines the L-arginine pocket.

This sequence belongs to the ATP:guanido phosphotransferase family.

The catalysed reaction is L-arginine + ATP = N(omega)-phospho-L-arginine + ADP + H(+). The polypeptide is Arginine kinase (ARGK) (Artemia franciscana (Brine shrimp)).